A 307-amino-acid polypeptide reads, in one-letter code: Porphobilinogen deaminase (307 aa).

An S-(dipyrrolylmethanemethyl)cysteine modification is found at Cys239.

The protein belongs to the HMBS family. Monomer. Dipyrromethane serves as cofactor.

It carries out the reaction 4 porphobilinogen + H2O = hydroxymethylbilane + 4 NH4(+). Its pathway is porphyrin-containing compound metabolism; protoporphyrin-IX biosynthesis; coproporphyrinogen-III from 5-aminolevulinate: step 2/4. Its function is as follows. Tetrapolymerization of the monopyrrole PBG into the hydroxymethylbilane pre-uroporphyrinogen in several discrete steps. The polypeptide is Porphobilinogen deaminase (Campylobacter jejuni subsp. jejuni serotype O:6 (strain 81116 / NCTC 11828)).